Consider the following 482-residue polypeptide: UDP-glucose 6-dehydrogenase 2 (482 aa).

NAD(+) is bound by residues 8-13 (GAGYVG), aspartate 33, arginine 38, 86-90 (VNTPT), 127-128 (ST), and glutamate 163. Substrate-binding positions include 159 to 163 (EFLAE), 218 to 225 (KLAANAFL), and 258 to 271 (RIGPRFLSASVGFG). Cysteine 274 (nucleophile) is an active-site residue. 274-277 (CFQK) contacts NAD(+). 336-337 (FK) serves as a coordination point for substrate. NAD(+) is bound at residue arginine 344. A Phosphoserine modification is found at serine 395. Arginine 449 serves as a coordination point for substrate.

The protein belongs to the UDP-glucose/GDP-mannose dehydrogenase family.

It carries out the reaction UDP-alpha-D-glucose + 2 NAD(+) + H2O = UDP-alpha-D-glucuronate + 2 NADH + 3 H(+). It functions in the pathway nucleotide-sugar biosynthesis; UDP-alpha-D-glucuronate biosynthesis; UDP-alpha-D-glucuronate from UDP-alpha-D-glucose: step 1/1. Functionally, involved in the biosynthesis of UDP-glucuronic acid (UDP-GlcA), providing nucleotide sugars for cell-wall polymers. The protein is UDP-glucose 6-dehydrogenase 2 (UGD2) of Oryza sativa subsp. japonica (Rice).